We begin with the raw amino-acid sequence, 154 residues long: 17.6 kDa class I heat shock protein (154 aa).

The sHSP domain maps to Glu-40–Gly-154.

The protein belongs to the small heat shock protein (HSP20) family. As to quaternary structure, forms oligomeric structures.

It is found in the cytoplasm. In Solanum peruvianum (Peruvian tomato), this protein is 17.6 kDa class I heat shock protein.